The primary structure comprises 248 residues: Ribonuclease PH (248 aa).

Residues Arg86 and 124-126 each bind phosphate; that span reads GTR.

The protein belongs to the RNase PH family. In terms of assembly, homohexameric ring arranged as a trimer of dimers.

It catalyses the reaction tRNA(n+1) + phosphate = tRNA(n) + a ribonucleoside 5'-diphosphate. Functionally, phosphorolytic 3'-5' exoribonuclease that plays an important role in tRNA 3'-end maturation. Removes nucleotide residues following the 3'-CCA terminus of tRNAs; can also add nucleotides to the ends of RNA molecules by using nucleoside diphosphates as substrates, but this may not be physiologically important. Probably plays a role in initiation of 16S rRNA degradation (leading to ribosome degradation) during starvation. This chain is Ribonuclease PH, found in Listeria monocytogenes serotype 4b (strain CLIP80459).